The following is a 263-amino-acid chain: Proteasome subunit alpha type-1 (263 aa).

Methionine 1 bears the N-acetylmethionine mark. Serine 110 is modified (phosphoserine; alternate). Serine 110 carries an O-linked (GlcNAc) serine; alternate glycan. A Glycyl lysine isopeptide (Lys-Gly) (interchain with G-Cter in ubiquitin) cross-link involves residue lysine 115. Serine 177 is modified (phosphoserine). Lysine 208 participates in a covalent cross-link: Glycyl lysine isopeptide (Lys-Gly) (interchain with G-Cter in ubiquitin). The interval 232 to 263 is disordered; sequence FLEGLEERPQRKAQPTQPADEPAEKADEPMEH. Basic and acidic residues predominate over residues 253 to 263; that stretch reads PAEKADEPMEH.

Belongs to the peptidase T1A family. As to quaternary structure, the 26S proteasome consists of a 20S proteasome core and two 19S regulatory subunits. The 20S proteasome core is a barrel-shaped complex made of 28 subunits that are arranged in four stacked rings. The two outer rings are each formed by seven alpha subunits, and the two inner rings are formed by seven beta subunits. The proteolytic activity is exerted by three beta-subunits PSMB5, PSMB6 and PSMB7. Interacts with NOTCH3. Interacts with ZFAND1.

The protein resides in the cytoplasm. It is found in the nucleus. Functionally, component of the 20S core proteasome complex involved in the proteolytic degradation of most intracellular proteins. This complex plays numerous essential roles within the cell by associating with different regulatory particles. Associated with two 19S regulatory particles, forms the 26S proteasome and thus participates in the ATP-dependent degradation of ubiquitinated proteins. The 26S proteasome plays a key role in the maintenance of protein homeostasis by removing misfolded or damaged proteins that could impair cellular functions, and by removing proteins whose functions are no longer required. Associated with the PA200 or PA28, the 20S proteasome mediates ubiquitin-independent protein degradation. This type of proteolysis is required in several pathways including spermatogenesis (20S-PA200 complex) or generation of a subset of MHC class I-presented antigenic peptides (20S-PA28 complex). In Bos taurus (Bovine), this protein is Proteasome subunit alpha type-1 (PSMA1).